A 138-amino-acid chain; its full sequence is Small ribosomal subunit protein uS12 (138 aa).

The disordered stretch occupies residues 1-20; that stretch reads MPTISQLINHGRSAKTSKSK. Position 102 is a 3-methylthioaspartic acid (Asp-102). The tract at residues 116–138 is disordered; sequence DAAGVDKRKQGRSIYGTKKPKEN.

Belongs to the universal ribosomal protein uS12 family. As to quaternary structure, part of the 30S ribosomal subunit. Contacts proteins S8 and S17. May interact with IF1 in the 30S initiation complex.

Its function is as follows. With S4 and S5 plays an important role in translational accuracy. In terms of biological role, interacts with and stabilizes bases of the 16S rRNA that are involved in tRNA selection in the A site and with the mRNA backbone. Located at the interface of the 30S and 50S subunits, it traverses the body of the 30S subunit contacting proteins on the other side and probably holding the rRNA structure together. The combined cluster of proteins S8, S12 and S17 appears to hold together the shoulder and platform of the 30S subunit. The protein is Small ribosomal subunit protein uS12 of Metamycoplasma arthritidis (strain 158L3-1) (Mycoplasma arthritidis).